Consider the following 136-residue polypeptide: MARTKQTARKSTGGKAPRKQLATKAARKSAPATGGVKKPHRYRPGTVALREIRRYQKSTELLIRKLPFQRLVREIAQDFKTDLRFQSSAVMALQEACEAYLVGLFEDTNLCAIHAKRVTIMPKDIQLARRIRGERA.

Positions 1 to 43 (MARTKQTARKSTGGKAPRKQLATKAARKSAPATGGVKKPHRYR) are disordered. The residue at position 3 (arginine 3) is an Asymmetric dimethylarginine; by PRMT6; alternate. The residue at position 3 (arginine 3) is a Citrulline; alternate. Threonine 4 is modified (phosphothreonine; by HASPIN and VRK1). At lysine 5 the chain carries Allysine; alternate. N6,N6,N6-trimethyllysine; alternate is present on lysine 5. Lysine 5 is modified (N6,N6-dimethyllysine; alternate). Position 5 is an N6-(2-hydroxyisobutyryl)lysine; alternate (lysine 5). Lysine 5 is subject to N6-(beta-hydroxybutyryl)lysine; alternate. An N6-acetyllysine; alternate modification is found at lysine 5. Lysine 5 bears the N6-crotonyllysine; alternate mark. Lysine 5 is modified (N6-methyllysine; alternate). At glutamine 6 the chain carries 5-glutamyl dopamine; alternate. Position 6 is a 5-glutamyl serotonin; alternate (glutamine 6). Threonine 7 is modified (phosphothreonine; by PKC). Position 9 is a citrulline; alternate (arginine 9). Position 9 is a symmetric dimethylarginine; by PRMT5; alternate (arginine 9). Lysine 10 carries the N6,N6,N6-trimethyllysine; alternate modification. Lysine 10 carries the post-translational modification N6,N6-dimethyllysine; alternate. N6-(2-hydroxyisobutyryl)lysine; alternate is present on lysine 10. N6-(beta-hydroxybutyryl)lysine; alternate is present on lysine 10. An N6-acetyllysine; alternate modification is found at lysine 10. Lysine 10 is subject to N6-crotonyllysine; alternate. Residue lysine 10 is modified to N6-methyllysine; alternate. N6-butyryllysine; alternate is present on lysine 10. Lysine 10 is subject to N6-lactoyllysine; alternate. The residue at position 11 (serine 11) is an ADP-ribosylserine; alternate. A Phosphoserine; alternate; by AURKB, AURKC, RPS6KA3, RPS6KA4 and RPS6KA5 modification is found at serine 11. Threonine 12 carries the phosphothreonine; by PKC and CHEK1 modification. Lysine 15 is subject to N6-(2-hydroxyisobutyryl)lysine; alternate. Lysine 15 bears the N6-(beta-hydroxybutyryl)lysine; alternate mark. Lysine 15 is modified (N6-acetyllysine; alternate). The residue at position 15 (lysine 15) is an N6-lactoyllysine; alternate. Lysine 15 bears the N6-glutaryllysine; alternate mark. Lysine 15 bears the N6-succinyllysine; alternate mark. The residue at position 18 (arginine 18) is a Citrulline; alternate. Arginine 18 bears the Asymmetric dimethylarginine; by CARM1; alternate mark. N6-(2-hydroxyisobutyryl)lysine; alternate is present on residues lysine 19 and lysine 24. Lysine 19 and lysine 24 each carry N6-(beta-hydroxybutyryl)lysine; alternate. N6-acetyllysine; alternate is present on residues lysine 19 and lysine 24. N6-crotonyllysine; alternate is present on residues lysine 19 and lysine 24. N6-methyllysine; alternate occurs at positions 19 and 24. 2 positions are modified to N6-butyryllysine; alternate: lysine 19 and lysine 24. An N6-lactoyllysine; alternate mark is found at lysine 19 and lysine 24. Lysine 19 and lysine 24 each carry N6-glutaryllysine; alternate. Lysine 19 carries N6-decanoyllysine lipidation. Arginine 27 carries the citrulline modification. An N6,N6,N6-trimethyllysine; alternate modification is found at lysine 28. Lysine 28 is modified (N6,N6-dimethyllysine; alternate). Lysine 28 is modified (N6-(2-hydroxyisobutyryl)lysine; alternate). Lysine 28 is subject to N6-(beta-hydroxybutyryl)lysine; alternate. Lysine 28 is modified (N6-acetyllysine; alternate). Lysine 28 carries the N6-crotonyllysine; alternate modification. Position 28 is an N6-methyllysine; alternate (lysine 28). N6-lactoyllysine; alternate is present on lysine 28. Lysine 28 carries the post-translational modification N6-glutaryllysine; alternate. ADP-ribosylserine; alternate is present on serine 29. A Phosphoserine; alternate; by AURKB, AURKC and RPS6KA5 modification is found at serine 29. Lysine 37 carries the post-translational modification N6,N6,N6-trimethyllysine; alternate. Residue lysine 37 is modified to N6,N6-dimethyllysine; alternate. Lysine 37 carries the post-translational modification N6-(2-hydroxyisobutyryl)lysine; alternate. Lysine 37 is subject to N6-acetyllysine; alternate. N6-methyllysine; alternate is present on lysine 37. Position 38 is an N6-methyllysine (lysine 38). Phosphotyrosine is present on tyrosine 42. Lysine 57 bears the N6,N6,N6-trimethyllysine; alternate mark. Lysine 57 carries the post-translational modification N6-(2-hydroxyisobutyryl)lysine; alternate. At lysine 57 the chain carries N6-(beta-hydroxybutyryl)lysine; alternate. Lysine 57 carries the post-translational modification N6-acetyllysine; alternate. Lysine 57 carries the N6-crotonyllysine; alternate modification. Lysine 57 carries the post-translational modification N6-lactoyllysine; alternate. At lysine 57 the chain carries N6-glutaryllysine; alternate. Lysine 57 carries the post-translational modification N6-succinyllysine; alternate. Lysine 57 is subject to N6-methyllysine; by EHMT2; alternate. Serine 58 is modified (phosphoserine). N6-(2-hydroxyisobutyryl)lysine; alternate occurs at positions 65 and 80. Lysine 65 and lysine 80 each carry N6-methyllysine; alternate. Lysine 80 carries the N6,N6,N6-trimethyllysine; alternate modification. Lysine 80 is modified (N6,N6-dimethyllysine; alternate). The residue at position 80 (lysine 80) is an N6-(beta-hydroxybutyryl)lysine; alternate. At lysine 80 the chain carries N6-acetyllysine; alternate. N6-lactoyllysine; alternate is present on lysine 80. At lysine 80 the chain carries N6-glutaryllysine; alternate. Residue lysine 80 is modified to N6-succinyllysine; alternate. Threonine 81 carries the post-translational modification Phosphothreonine. Serine 87 carries the post-translational modification Phosphoserine. Threonine 108 is subject to Phosphothreonine. N6-acetyllysine; alternate occurs at positions 116 and 123. N6-glutaryllysine; alternate is present on residues lysine 116 and lysine 123. The residue at position 123 (lysine 123) is an N6-(2-hydroxyisobutyryl)lysine; alternate. Lysine 123 carries the N6-(beta-hydroxybutyryl)lysine; alternate modification. Lysine 123 carries the post-translational modification N6-methyllysine; alternate. Lysine 123 carries the post-translational modification N6-succinyllysine; alternate.

It belongs to the histone H3 family. The nucleosome is a histone octamer containing two molecules each of H2A, H2B, H3 and H4 assembled in one H3-H4 heterotetramer and two H2A-H2B heterodimers. The octamer wraps approximately 147 bp of DNA. Interacts with TONSL; CHAF1A; CHAF1B; MCM2 and DNAJC9. Interacts with NASP; NASP is a histone chaperone that stabilizes and maintains a soluble pool of Histone H3-H4 dimers. Acetylation is generally linked to gene activation. Acetylation on Lys-10 (H3K9ac) impairs methylation at Arg-9 (H3R8me2s). Acetylation on Lys-19 (H3K18ac) and Lys-24 (H3K24ac) favors methylation at Arg-18 (H3R17me). Acetylation at Lys-123 (H3K122ac) by EP300/p300 plays a central role in chromatin structure: localizes at the surface of the histone octamer and stimulates transcription, possibly by promoting nucleosome instability. Post-translationally, citrullination at Arg-9 (H3R8ci) and/or Arg-18 (H3R17ci) by PADI4 impairs methylation and represses transcription. In terms of processing, asymmetric dimethylation at Arg-18 (H3R17me2a) by CARM1 is linked to gene activation. Symmetric dimethylation at Arg-9 (H3R8me2s) by PRMT5 is linked to gene repression. Asymmetric dimethylation at Arg-3 (H3R2me2a) by PRMT6 is linked to gene repression and is mutually exclusive with H3 Lys-5 methylation (H3K4me2 and H3K4me3). H3R2me2a is present at the 3' of genes regardless of their transcription state and is enriched on inactive promoters, while it is absent on active promoters. Methylation at Lys-5 (H3K4me), Lys-37 (H3K36me) and Lys-80 (H3K79me) are linked to gene activation. Methylation at Lys-5 (H3K4me) facilitates subsequent acetylation of H3 and H4. Methylation at Lys-80 (H3K79me) is associated with DNA double-strand break (DSB) responses and is a specific target for TP53BP1. Methylation at Lys-10 (H3K9me) and Lys-28 (H3K27me) are linked to gene repression. Methylation at Lys-10 (H3K9me) is a specific target for HP1 proteins (CBX1, CBX3 and CBX5) and prevents subsequent phosphorylation at Ser-11 (H3S10ph) and acetylation of H3 and H4. Methylation at Lys-5 (H3K4me) and Lys-80 (H3K79me) require preliminary monoubiquitination of H2B at 'Lys-120'. Methylation at Lys-10 (H3K9me) and Lys-28 (H3K27me) are enriched in inactive X chromosome chromatin. Monomethylation at Lys-57 (H3K56me1) by EHMT2/G9A in G1 phase promotes interaction with PCNA and is required for DNA replication. Post-translationally, phosphorylated at Thr-4 (H3T3ph) by VRK1. Phosphorylated at Thr-4 (H3T3ph) by HASPIN during prophase and dephosphorylated during anaphase. Phosphorylation at Ser-11 (H3S10ph) by AURKB is crucial for chromosome condensation and cell-cycle progression during mitosis and meiosis. In addition phosphorylation at Ser-11 (H3S10ph) by RPS6KA4 and RPS6KA5 is important during interphase because it enables the transcription of genes following external stimulation, like mitogens, stress, growth factors or UV irradiation and result in the activation of genes, such as c-fos and c-jun. Phosphorylation at Ser-11 (H3S10ph), which is linked to gene activation, prevents methylation at Lys-10 (H3K9me) but facilitates acetylation of H3 and H4. Phosphorylation at Ser-11 (H3S10ph) by AURKB mediates the dissociation of HP1 proteins (CBX1, CBX3 and CBX5) from heterochromatin. Phosphorylation at Ser-11 (H3S10ph) is also an essential regulatory mechanism for neoplastic cell transformation. Phosphorylated at Ser-29 (H3S28ph) by MAP3K20 isoform 1, RPS6KA5 or AURKB during mitosis or upon ultraviolet B irradiation. Phosphorylation at Thr-7 (H3T6ph) by PRKCB is a specific tag for epigenetic transcriptional activation that prevents demethylation of Lys-5 (H3K4me) by LSD1/KDM1A. At centromeres, specifically phosphorylated at Thr-12 (H3T11ph) from prophase to early anaphase, by DAPK3 and PKN1. Phosphorylation at Thr-12 (H3T11ph) by PKN1 or isoform M2 of PKM (PKM2) is a specific tag for epigenetic transcriptional activation that promotes demethylation of Lys-10 (H3K9me) by KDM4C/JMJD2C. Phosphorylation at Thr-12 (H3T11ph) by chromatin-associated CHEK1 regulates the transcription of cell cycle regulatory genes by modulating acetylation of Lys-10 (H3K9ac). Phosphorylation at Tyr-42 (H3Y41ph) by JAK2 promotes exclusion of CBX5 (HP1 alpha) from chromatin. In terms of processing, monoubiquitinated by RAG1 in lymphoid cells, monoubiquitination is required for V(D)J recombination. Ubiquitinated by the CUL4-DDB-RBX1 complex in response to ultraviolet irradiation. This may weaken the interaction between histones and DNA and facilitate DNA accessibility to repair proteins. Lysine deamination at Lys-5 (H3K4all) to form allysine is mediated by LOXL2. Allysine formation by LOXL2 only takes place on H3K4me3 and results in gene repression. Post-translationally, crotonylation (Kcr) is specifically present in male germ cells and marks testis-specific genes in post-meiotic cells, including X-linked genes that escape sex chromosome inactivation in haploid cells. Crotonylation marks active promoters and enhancers and confers resistance to transcriptional repressors. It is also associated with post-meiotically activated genes on autosomes. In terms of processing, butyrylation of histones marks active promoters and competes with histone acetylation. It is present during late spermatogenesis. Succinylation at Lys-80 (H3K79succ) by KAT2A takes place with a maximum frequency around the transcription start sites of genes. It gives a specific tag for epigenetic transcription activation. Desuccinylation at Lys-123 (H3K122succ) by SIRT7 in response to DNA damage promotes chromatin condensation and double-strand breaks (DSBs) repair. Post-translationally, serine ADP-ribosylation by PARP1 or PARP2 constitutes the primary form of ADP-ribosylation of proteins in response to DNA damage. Serine ADP-ribosylation at Ser-11 (H3S10ADPr) promotes recruitment of CHD1L. H3S10ADPr is mutually exclusive with phosphorylation at Ser-11 (H3S10ph) and impairs acetylation at Lys-10 (H3K9ac). In terms of processing, serotonylated by TGM2 at Gln-6 (H3Q5ser) during serotonergic neuron differentiation. H3Q5ser is associated with trimethylation of Lys-5 (H3K4me3) and enhances general transcription factor IID (TFIID) complex-binding to H3K4me3, thereby facilitating transcription. Dopaminylated by TGM2 at Gln-6 (H3Q5dop) in ventral tegmental area (VTA) neurons. H3Q5dop mediates neurotransmission-independent role of nuclear dopamine by regulating relapse-related transcriptional plasticity in the reward system. Post-translationally, lactylated in macrophages by EP300/P300 by using lactoyl-CoA directly derived from endogenous or exogenous lactate, leading to stimulates gene transcription.

The protein localises to the nucleus. It is found in the chromosome. Functionally, core component of nucleosome. Nucleosomes wrap and compact DNA into chromatin, limiting DNA accessibility to the cellular machineries which require DNA as a template. Histones thereby play a central role in transcription regulation, DNA repair, DNA replication and chromosomal stability. DNA accessibility is regulated via a complex set of post-translational modifications of histones, also called histone code, and nucleosome remodeling. This chain is Histone H3.1, found in Homo sapiens (Human).